We begin with the raw amino-acid sequence, 430 residues long: MRVGIKVLGCPKNEADCEILAGVLRERGHEIVFDVKDADVVVLDTCAFIEDAKRESIDEIFSFIDAKDQYSYKLVVKGCLVQRYYEELKKEIPEVDQWIGVVDPEEIANALEKGTDLVPNRPETVYRYRKRIDLEERPYAYVKISDGCDRGCTFCSIPSFKGSLRSRSIEDITHEVEDLLKEGKKEIILVAQDTTSYGIDLYRKQALPDLLRRLNSLNGEFWIRVMYLHPDHLTEEIISAMLELDKVVKYFDVPVQHGSDKILKLMGRTKSSEELKKMLSSIRERFPDAVLRTSIIVGFPGETEEDFEELKRFVEEIQFDKLGAFVYSDEEGTVAFNLKEKVDPEVAKRRQEELLLLQAEISNSRLDRFIGRKLKFLVEGKEGKFLVGRTWTEAPEVDGVVFVRGKGKIGDFLEVVIKEHDEYDMWGSVT.

Positions 1–116 constitute an MTTase N-terminal domain; it reads MRVGIKVLGC…IANALEKGTD (116 aa). The [4Fe-4S] cluster site is built by C10, C46, C79, C148, C152, and C155. Residues 134–365 form the Radical SAM core domain; it reads LEERPYAYVK…LLQAEISNSR (232 aa). A TRAM domain is found at 367 to 430; sequence DRFIGRKLKF…DEYDMWGSVT (64 aa).

It belongs to the methylthiotransferase family. RimO subfamily. It depends on [4Fe-4S] cluster as a cofactor.

It is found in the cytoplasm. The enzyme catalyses L-aspartate(89)-[ribosomal protein uS12]-hydrogen + (sulfur carrier)-SH + AH2 + 2 S-adenosyl-L-methionine = 3-methylsulfanyl-L-aspartate(89)-[ribosomal protein uS12]-hydrogen + (sulfur carrier)-H + 5'-deoxyadenosine + L-methionine + A + S-adenosyl-L-homocysteine + 2 H(+). Catalyzes the methylthiolation of an aspartic acid residue of ribosomal protein uS12. The protein is Ribosomal protein uS12 methylthiotransferase RimO of Thermotoga sp. (strain RQ2).